We begin with the raw amino-acid sequence, 330 residues long: DNA primase small subunit PriS (330 aa).

Catalysis depends on residues aspartate 101 and aspartate 103. Residues cysteine 116, cysteine 119, cysteine 128, and aspartate 131 each contribute to the Zn(2+) site. Residue aspartate 235 is part of the active site.

The protein belongs to the eukaryotic-type primase small subunit family. In terms of assembly, heterodimer of a small subunit (PriS) and a large subunit (PriL). Requires Mg(2+) as cofactor. Mn(2+) is required as a cofactor.

In terms of biological role, catalytic subunit of DNA primase, an RNA polymerase that catalyzes the synthesis of short RNA molecules used as primers for DNA polymerase during DNA replication. The small subunit contains the primase catalytic core and has DNA synthesis activity on its own. Binding to the large subunit stabilizes and modulates the activity, increasing the rate of DNA synthesis while decreasing the length of the DNA fragments, and conferring RNA synthesis capability. The DNA polymerase activity may enable DNA primase to also catalyze primer extension after primer synthesis. May also play a role in DNA repair. This is DNA primase small subunit PriS from Saccharolobus islandicus (strain Y.N.15.51 / Yellowstone #2) (Sulfolobus islandicus).